We begin with the raw amino-acid sequence, 636 residues long: LEAF RUST 10 DISEASE-RESISTANCE LOCUS RECEPTOR-LIKE PROTEIN KINASE-like 1.5 (636 aa).

An N-terminal signal peptide occupies residues 1–26; the sequence is MSQPPWRCFSLLIFVLTIFSTKPSSA. At 27 to 257 the chain is on the extracellular side; it reads STSCSSSFHC…NNKRVNHIAV (231 aa). Residues Asn-73, Asn-102, Asn-146, and Asn-224 are each glycosylated (N-linked (GlcNAc...) asparagine). A helical transmembrane segment spans residues 258–278; it reads LSLIFALTCLLLVFSVAVAIF. The Cytoplasmic portion of the chain corresponds to 279-636; sequence RSRRASFLSS…RVADDDVAKN (358 aa). In terms of domain architecture, Protein kinase spans 324–628; that stretch reads FDPKRKIGDG…LRRIRSHTRV (305 aa). ATP contacts are provided by residues 330–338 and Lys-352; that span reads IGDGGFGSV. Asp-458 (proton acceptor) is an active-site residue.

It belongs to the protein kinase superfamily. Ser/Thr protein kinase family.

It is found in the cell membrane. It catalyses the reaction L-seryl-[protein] + ATP = O-phospho-L-seryl-[protein] + ADP + H(+). The enzyme catalyses L-threonyl-[protein] + ATP = O-phospho-L-threonyl-[protein] + ADP + H(+). The sequence is that of LEAF RUST 10 DISEASE-RESISTANCE LOCUS RECEPTOR-LIKE PROTEIN KINASE-like 1.5 from Arabidopsis thaliana (Mouse-ear cress).